The sequence spans 966 residues: MNPGGEQTIMEQPAQQQQQQQQQQQQQQQQAAVPQQPLDPLTQSTAETWLSIASLAETLGDGDRAAMAYDATLQFNPSSAKALTSLAHLYRSRDMFQRAAELYERALLVNPELSDVWATLGHCYLMLDDLQRAYNAYQQALYHLSNPNVPKLWHGIGILYDRYGSLDYAEEAFAKVLELDPHFEKANEIYFRLGIIYKHQGKWSQALECFRYILPQPPAPLQEWDIWFQLGSVLESMGEWQGAKEAYEHVLAQNQHHAKVLQQLGCLYGMSNVQFYDPQKALDYLLKSLEADPSDATTWYHLGRVHMIRTDYTAAYDAFQQAVNRDSRNPIFWCSIGVLYYQISQYRDALDAYTRAIRLNPYISEVWYDLGTLYETCNNQLSDALDAYKQAARLDVNNVHIRERLEALTKQLENPGNINKSNGAPTNASPAPPPVILQPTLQPNDQGNPLNTRISAQSANATASMVQQQHPAQQTPINSSATMYSNGASPQLQAQAQAQAQAQAQAQAQAQAQAQAQAQAQAQAQAQAQAQAQAQAHAQAQAQAQAQAQAQAQAQAQQQQQQQQQQQQQQQQQQQQQQQQQQQQQQQLQPLPRQQLQQKGVSVQMLNPQQGQPYITQPTVIQAHQLQPFSTQAMEHPQSSQLPPQQQQLQSVQHPQQLQGQPQAQAPQPLIQHNVEQNVLPQKRYMEGAIHTLVDAAVSSSTHTENNTKSPRQPTHAIPTQAPATGITNAEPQVKKQKLNSPNSNINKLVNTATSIEENAKSEVSNQSPAVVESNTNNTSQEEKPVKANSIPSVIGAQEPPQEASPAEEATKAASVSPSTKPLNTEPESSSVQPTVSSESSTTKANDQSTAETIELSTATVPAEASPVEDEVRQHSKEENGTTEASAPSTEEAEPAASRDAEKQQDETAATTITVIKPTLETMETVKEEAKMREEEQTSQEKSPQENTLPRENVVRQVEEDENYDD.

The disordered stretch occupies residues 1–37 (MNPGGEQTIMEQPAQQQQQQQQQQQQQQQQAAVPQQP). A compositionally biased stretch (low complexity) spans 12–36 (QPAQQQQQQQQQQQQQQQQAAVPQQ). TPR repeat units lie at residues 46 to 79 (AETW…NPSS), 80 to 113 (AKAL…NPEL), 114 to 147 (SDVW…LSNP), 150 to 183 (PKLW…DPHF), 187 to 220 (NEIY…PPAP), 224 to 257 (WDIW…NQHH), 262 to 295 (QQLG…DPSD), 296 to 329 (ATTW…DSRN), 330 to 363 (PIFW…NPYI), and 364 to 398 (SEVW…DVNN). 2 stretches are compositionally biased toward polar residues: residues 412-429 (LENP…TNAS) and 439-489 (PTLQ…NGAS). Disordered regions lie at residues 412–489 (LENP…NGAS), 631–666 (TQAM…QAQA), and 699–723 (SSST…TQAP). Ser429 is subject to Phosphoserine. Residues 467 to 682 (QQQHPAQQTP…HNVEQNVLPQ (216 aa)) form a prion domain (PrD) region. Thr475 is subject to Phosphothreonine. A compositionally biased stretch (low complexity) spans 637–666 (PQSSQLPPQQQQLQSVQHPQQLQGQPQAQA). Residues 699–713 (SSSTHTENNTKSPRQ) show a composition bias toward polar residues. 3 positions are modified to phosphoserine: Ser710, Ser741, and Ser768. Residues 759–780 (NAKSEVSNQSPAVVESNTNNTS) show a composition bias toward polar residues. Positions 759–966 (NAKSEVSNQS…QVEEDENYDD (208 aa)) are disordered. Residues 797–808 (AQEPPQEASPAE) show a composition bias toward low complexity. Residues 814 to 823 (ASVSPSTKPL) are compositionally biased toward polar residues. Residues Ser815 and Ser817 each carry the phosphoserine modification. Over residues 826 to 843 (EPESSSVQPTVSSESSTT) the composition is skewed to low complexity. Residues 844 to 860 (KANDQSTAETIELSTAT) show a composition bias toward polar residues. Position 866 is a phosphoserine (Ser866). Positions 870–880 (DEVRQHSKEEN) are enriched in basic and acidic residues. Low complexity predominate over residues 882–896 (TTEASAPSTEEAEPA). Composition is skewed to basic and acidic residues over residues 897–906 (ASRDAEKQQD) and 924–936 (ETVK…REEE). Over residues 940–950 (QEKSPQENTLP) the composition is skewed to polar residues. Ser943 carries the phosphoserine modification.

It belongs to the CYC8/SSN6 family. As to quaternary structure, associates with TUP1 to form the CYC8-TUP1 (or TUP1-SSN6) corepressor complex that is composed of 4 copies of TUP1 and one copy of CYC8. Interacts with MATALPHA2, CTI6, MIG1, TUP1, SUT1, RFX1, PGD1, HOS1, HOS2 and RPD3.

The protein resides in the nucleus. Acts as a component of the CYC8-TUP1 corepressor complex which is involved in the repression of many genes in a wide variety of physiological processes including heme-regulated and catabolite repressed genes. May also be involved in the derepression of at least some target genes. The complex is recruited to target genes by interaction with DNA-bound transcriptional repressors, like MATALPHA2, MIG1, RFX1 and SKO1. The complex recruits histone deacetylases to produce a repressive chromatin structure, interacts with hypoacetylated N-terminal tails of histones H3 and H4 that have been programmed for repression by the action of histone deacetylases and interferes directly with the transcriptional machinery by associating with the RNA polymerase II mediator complex. The polypeptide is General transcriptional corepressor CYC8 (CYC8) (Saccharomyces cerevisiae (strain ATCC 204508 / S288c) (Baker's yeast)).